A 331-amino-acid polypeptide reads, in one-letter code: NADH-quinone oxidoreductase subunit H 2 (331 aa).

8 consecutive transmembrane segments (helical) span residues 6–26, 79–99, 120–140, 155–175, 193–213, 242–262, 271–291, and 310–330; these read AGFL…LLVA, IFML…AVIP, VGLL…ALGG, GAAQ…PVVM, PFIL…MAEI, LFFL…AVLF, LPPV…MIWV, and VLIP…LWMG.

The protein belongs to the complex I subunit 1 family. In terms of assembly, NDH-1 is composed of 14 different subunits. Subunits NuoA, H, J, K, L, M, N constitute the membrane sector of the complex.

The protein localises to the cell inner membrane. It carries out the reaction a quinone + NADH + 5 H(+)(in) = a quinol + NAD(+) + 4 H(+)(out). NDH-1 shuttles electrons from NADH, via FMN and iron-sulfur (Fe-S) centers, to quinones in the respiratory chain. The immediate electron acceptor for the enzyme in this species is believed to be ubiquinone. Couples the redox reaction to proton translocation (for every two electrons transferred, four hydrogen ions are translocated across the cytoplasmic membrane), and thus conserves the redox energy in a proton gradient. This subunit may bind ubiquinone. This Syntrophobacter fumaroxidans (strain DSM 10017 / MPOB) protein is NADH-quinone oxidoreductase subunit H 2.